A 57-amino-acid chain; its full sequence is Large ribosomal subunit protein bL32c (57 aa).

The tract at residues 1 to 21 is disordered; it reads MAVPKKRTSKSKKNLRKNTWK.

Belongs to the bacterial ribosomal protein bL32 family.

Its subcellular location is the plastid. It localises to the chloroplast. In Stigeoclonium helveticum (Green alga), this protein is Large ribosomal subunit protein bL32c.